The sequence spans 137 residues: Large ribosomal subunit protein uL16c (137 aa).

Belongs to the universal ribosomal protein uL16 family. As to quaternary structure, part of the 50S ribosomal subunit.

The protein localises to the plastid. It localises to the chloroplast. In Trieres chinensis (Marine centric diatom), this protein is Large ribosomal subunit protein uL16c.